Reading from the N-terminus, the 458-residue chain is tRNA-2-methylthio-N(6)-dimethylallyladenosine synthase (458 aa).

An MTTase N-terminal domain is found at 15–134; that stretch reads KKVFIKTYGC…LPDLLEQTKQ (120 aa). The [4Fe-4S] cluster site is built by Cys-24, Cys-60, Cys-97, Cys-175, Cys-179, and Cys-182. The Radical SAM core domain occupies 161 to 393; sequence RKRGVSAFLT…QVLLLEQQNA (233 aa). Positions 396–457 constitute a TRAM domain; sequence RSKIGQTTDV…SNSFVGEMTN (62 aa).

The protein belongs to the methylthiotransferase family. MiaB subfamily. In terms of assembly, monomer. [4Fe-4S] cluster is required as a cofactor.

Its subcellular location is the cytoplasm. It carries out the reaction N(6)-dimethylallyladenosine(37) in tRNA + (sulfur carrier)-SH + AH2 + 2 S-adenosyl-L-methionine = 2-methylsulfanyl-N(6)-dimethylallyladenosine(37) in tRNA + (sulfur carrier)-H + 5'-deoxyadenosine + L-methionine + A + S-adenosyl-L-homocysteine + 2 H(+). Catalyzes the methylthiolation of N6-(dimethylallyl)adenosine (i(6)A), leading to the formation of 2-methylthio-N6-(dimethylallyl)adenosine (ms(2)i(6)A) at position 37 in tRNAs that read codons beginning with uridine. The sequence is that of tRNA-2-methylthio-N(6)-dimethylallyladenosine synthase from Bartonella henselae (strain ATCC 49882 / DSM 28221 / CCUG 30454 / Houston 1) (Rochalimaea henselae).